A 248-amino-acid chain; its full sequence is Coproheme decarboxylase (248 aa).

Fe-coproporphyrin III is bound by residues Arg-130, Tyr-144, 144–148 (YPMDK), Lys-148, His-171, Gln-184, and Ser-222. Tyr-144 is a catalytic residue.

This sequence belongs to the ChdC family. Type 1 subfamily. As to quaternary structure, homopentamer. Requires Fe-coproporphyrin III as cofactor.

The catalysed reaction is Fe-coproporphyrin III + 2 H2O2 + 2 H(+) = heme b + 2 CO2 + 4 H2O. It carries out the reaction Fe-coproporphyrin III + H2O2 + H(+) = harderoheme III + CO2 + 2 H2O. It catalyses the reaction harderoheme III + H2O2 + H(+) = heme b + CO2 + 2 H2O. The protein operates within porphyrin-containing compound metabolism; protoheme biosynthesis. Its function is as follows. Involved in coproporphyrin-dependent heme b biosynthesis. Catalyzes the decarboxylation of Fe-coproporphyrin III (coproheme) to heme b (protoheme IX), the last step of the pathway. The reaction occurs in a stepwise manner with a three-propionate harderoheme intermediate. The chain is Coproheme decarboxylase from Geobacillus stearothermophilus (strain DSM 13240 / CIP 106956 / 10).